The chain runs to 127 residues: Ribonuclease P protein component (127 aa).

The protein belongs to the RnpA family. Consists of a catalytic RNA component (M1 or rnpB) and a protein subunit.

It catalyses the reaction Endonucleolytic cleavage of RNA, removing 5'-extranucleotides from tRNA precursor.. In terms of biological role, RNaseP catalyzes the removal of the 5'-leader sequence from pre-tRNA to produce the mature 5'-terminus. It can also cleave other RNA substrates such as 4.5S RNA. The protein component plays an auxiliary but essential role in vivo by binding to the 5'-leader sequence and broadening the substrate specificity of the ribozyme. This Rippkaea orientalis (strain PCC 8801 / RF-1) (Cyanothece sp. (strain PCC 8801)) protein is Ribonuclease P protein component.